We begin with the raw amino-acid sequence, 263 residues long: Lens fiber major intrinsic protein (263 aa).

The Cytoplasmic portion of the chain corresponds to 1-9 (MWELRSASF). Residues 10–29 (WRAIFAEFFATLFYVFFGLG) traverse the membrane as a helical segment. Topologically, residues 30 to 41 (ASLRWAPGPLHV) are extracellular. Residues 42–59 (LQVALAFGLALAXLVQTV) traverse the membrane as a helical segment. The Cytoplasmic portion of the chain corresponds to 60–61 (GH). An intramembrane region (discontinuously helical) is located at residues 62–77 (ISGAHVNPAVTFXFLV). The NPA 1 motif lies at 68-70 (NPA). Residues 78–82 (GSQMS) are Cytoplasmic-facing. The helical transmembrane segment at 83–106 (LLRAFCYMAAQLLGAVAGAAVLYS) threads the bilayer. The Extracellular portion of the chain corresponds to 107–127 (VTPPAVRGNLALNTLHAGVSV). Residues 128 to 148 (XQATTVEIFLTLQFVLCIFAT) traverse the membrane as a helical segment. Residues 149–156 (YDERRNGR) lie on the Cytoplasmic side of the membrane. The chain crosses the membrane as a helical span at residues 157 to 175 (LGSVALAVGFSLTLGHLFG). Topologically, residues 176-178 (MYY) are extracellular. An intramembrane region (discontinuously helical) is located at residues 179–193 (TGAGMNPARSFAPAI). Positions 184 to 186 (NPA) match the NPA 2 motif. Over 194–200 (LTRNFTN) the chain is Extracellular. A helical membrane pass occupies residues 201 to 222 (HWVYWVGPIIGGGLGSLLYDFL). The Cytoplasmic segment spans residues 223 to 263 (LFPRLKSVSERLSILKGTRPSDNNGQPEGTGEPVELKTQAL). The interaction with CALM stretch occupies residues 227-237 (LKSVSERLSIL). Residues serine 235 and serine 243 each carry the phosphoserine modification. Positions 238–263 (KGTRPSDNNGQPEGTGEPVELKTQAL) are disordered. Asparagine 245 and asparagine 246 each carry deamidated asparagine; by deterioration.

Belongs to the MIP/aquaporin (TC 1.A.8) family. In terms of assembly, homotetramer; each monomer provides an independent water pore. Two homotetramers on opposing membranes can dimerize, forming a cell-cell junction. Interacts with CALM; the calcium-calmodulin/CALM complex interacts with the cytoplasmic domains of two aquaporins, leading to channel closure. Interacts with BFSP1 (via C-terminus); prevents calcium-dependent inhibition of the water channel activity. In terms of processing, subject to partial proteolytic cleavage in the eye lens core. Partial proteolysis promotes interactions between tetramers from adjoining membranes. Fatty acylated at Met-1 and Lys-238. The acyl modifications, in decreasing order of ion abundance, are: oleoyl (C18:1) &gt; palmitoyl (C16:0) &gt; stearoyl (C18:0) &gt; eicosenoyl (C20:1) &gt; dihomo-gamma-linolenoyl (C20:3) &gt; palmitoleoyl (C16:1) &gt; eicosadienoyl (C20:2). As to expression, detected in eye lens (at protein level).

The protein resides in the cell membrane. It localises to the cell junction. The catalysed reaction is H2O(in) = H2O(out). Its activity is regulated as follows. The water channel activity is inhibited by calcium through calmodulin/CALM. Aquaporins form homotetrameric transmembrane channels, with each monomer independently mediating water transport across the plasma membrane along its osmotic gradient. Specifically expressed in lens fiber cells, this aquaporin is crucial for maintaining lens water homeostasis and transparency. Beyond water permeability, it also acts as a cell-to-cell adhesion molecule, forming thin junctions between lens fiber cells that are essential for maintaining the ordered structure and transparency of the lens. The protein is Lens fiber major intrinsic protein of Cavia porcellus (Guinea pig).